A 585-amino-acid chain; its full sequence is MGRKLLGLLMLAVLLAGCAGVPSSSAPQAIGTVERPAPSNLPKPTPGMDPEVLLREFLKATADPANRHLAARQFLTQSASNAWDDAGSALLIDHVVFVETRAAERVSATMRADILGSLSDMGVFETAEGVLPDPGPIELVKTSGGWRIDRLPNGVFLDWQQFQATYKRNTLYFADPTGKTVVPDPRYVAVPDHDQLATELVSKLIAGPRPEMAHTVRNLLAPPLRLRGPVTRADGGKSGIGRGYGGARIDLEKLSTTDPHSRQLVAAQIIWTLARADIRGPYVINADGAPLDDRFRDGWTTSDVAATDPGVADGAGAGLHALVNGSLVSLDGQHTVVVPGAFGRMGDQTGAALSRNGRQVASVVTLHRGAPDMAASLWIGDLGAEAVQSADGHSLSRPTWSLDDVVWVVVDGNNVLRAIQEPASGQPARLPVDSVAVATRFPGPITDLQLSRDSTRAAMVIGGQVILASVEQTQAGQYALTYPRRLGFGLGNSVVSLSWRTGDDIVVTRTDSSHPVSYVNLDGVNSDAPPHGVQMPVTTVVANPSTAYVAGPQGVLQYSPSADGQQGWSEVPGLTVPGAAPVLPG.

An N-terminal signal peptide occupies residues 1 to 17; sequence MGRKLLGLLMLAVLLAG. A lipid anchor (N-palmitoyl cysteine) is attached at cysteine 18. Residue cysteine 18 is the site of S-diacylglycerol cysteine attachment. Disordered stretches follow at residues 24-46 and 560-585; these read SSAP…KPTP and PSAD…VLPG.

It belongs to the LpqB lipoprotein family.

The protein resides in the cell membrane. The polypeptide is Lipoprotein LpqB (Mycobacterium paratuberculosis).